The following is a 92-amino-acid chain: Small ribosomal subunit protein uS19c (92 aa).

It belongs to the universal ribosomal protein uS19 family.

It is found in the plastid. The protein resides in the chloroplast. Functionally, protein S19 forms a complex with S13 that binds strongly to the 16S ribosomal RNA. This Cycas taitungensis (Prince sago) protein is Small ribosomal subunit protein uS19c.